The chain runs to 466 residues: D-inositol 3-phosphate glycosyltransferase (466 aa).

A compositionally biased stretch (low complexity) spans 1–12; it reads MRPMRAGAGAAG. Positions 1-22 are disordered; the sequence is MRPMRAGAGAAGESCKDDGVRP. Position 43 (His-43) interacts with 1D-myo-inositol 3-phosphate. UDP-N-acetyl-alpha-D-glucosamine is bound by residues 49–50 and Gly-57; that span reads QP. Residues 54–59, Lys-112, Tyr-145, Thr-169, and Arg-189 each bind 1D-myo-inositol 3-phosphate; that span reads DAGGMN. Residues Arg-263, Lys-268, and Gln-321 each coordinate UDP-N-acetyl-alpha-D-glucosamine. The Mg(2+) site is built by Phe-330, His-331, and Val-333. Positions 343 and 351 each coordinate UDP-N-acetyl-alpha-D-glucosamine. Thr-357 is a Mg(2+) binding site. The segment at 446–466 is disordered; it reads VRDPVAARKPRRWTARRGVGA.

This sequence belongs to the glycosyltransferase group 1 family. MshA subfamily. As to quaternary structure, homodimer.

It carries out the reaction 1D-myo-inositol 3-phosphate + UDP-N-acetyl-alpha-D-glucosamine = 1D-myo-inositol 2-acetamido-2-deoxy-alpha-D-glucopyranoside 3-phosphate + UDP + H(+). In terms of biological role, catalyzes the transfer of a N-acetyl-glucosamine moiety to 1D-myo-inositol 3-phosphate to produce 1D-myo-inositol 2-acetamido-2-deoxy-glucopyranoside 3-phosphate in the mycothiol biosynthesis pathway. This is D-inositol 3-phosphate glycosyltransferase from Mycobacterium marinum (strain ATCC BAA-535 / M).